Reading from the N-terminus, the 123-residue chain is Large ribosomal subunit protein bL19 (123 aa).

It belongs to the bacterial ribosomal protein bL19 family.

In terms of biological role, this protein is located at the 30S-50S ribosomal subunit interface and may play a role in the structure and function of the aminoacyl-tRNA binding site. This chain is Large ribosomal subunit protein bL19 (rplS), found in Treponema pallidum (strain Nichols).